A 243-amino-acid chain; its full sequence is Ribonuclease HII (243 aa).

An RNase H type-2 domain is found at 23–217 (SVIVGVDEVG…LSSECEGAPP (195 aa)). Residues aspartate 29, glutamate 30, and aspartate 122 each coordinate a divalent metal cation. The tract at residues 223–243 (LSSTGIKTPVDGRGDAVATRD) is disordered. Residues 232 to 243 (VDGRGDAVATRD) show a composition bias toward basic and acidic residues.

This sequence belongs to the RNase HII family. Mn(2+) is required as a cofactor. It depends on Mg(2+) as a cofactor.

The protein resides in the cytoplasm. The catalysed reaction is Endonucleolytic cleavage to 5'-phosphomonoester.. Functionally, endonuclease that specifically degrades the RNA of RNA-DNA hybrids. The polypeptide is Ribonuclease HII (Anaplasma marginale (strain St. Maries)).